A 182-amino-acid polypeptide reads, in one-letter code: ATP-dependent protease subunit HslV (182 aa).

The active site involves threonine 12. Na(+) is bound by residues alanine 167, cysteine 170, and threonine 173.

It belongs to the peptidase T1B family. HslV subfamily. As to quaternary structure, a double ring-shaped homohexamer of HslV is capped on each side by a ring-shaped HslU homohexamer. The assembly of the HslU/HslV complex is dependent on binding of ATP.

It is found in the cytoplasm. It carries out the reaction ATP-dependent cleavage of peptide bonds with broad specificity.. Its activity is regulated as follows. Allosterically activated by HslU binding. Its function is as follows. Protease subunit of a proteasome-like degradation complex believed to be a general protein degrading machinery. In Paramagnetospirillum magneticum (strain ATCC 700264 / AMB-1) (Magnetospirillum magneticum), this protein is ATP-dependent protease subunit HslV.